A 126-amino-acid chain; its full sequence is MSKPSYVKFEVPQELADKVLEAVKKAKDSGKIKKGTNETTKAVERSQAKLVVIAEDVQPEEIVAHLPLLCEEKKIPYVYVPSKKSLGEACGLQVAAASVALMDPGEAKDLVDEIVKRVNEIKGKSS.

It belongs to the eukaryotic ribosomal protein eL8 family. In terms of assembly, part of the 50S ribosomal subunit. Probably part of the RNase P complex.

It localises to the cytoplasm. Functionally, multifunctional RNA-binding protein that recognizes the K-turn motif in ribosomal RNA, the RNA component of RNase P, box H/ACA, box C/D and box C'/D' sRNAs. The sequence is that of Large ribosomal subunit protein eL8 from Sulfolobus acidocaldarius (strain ATCC 33909 / DSM 639 / JCM 8929 / NBRC 15157 / NCIMB 11770).